The following is a 161-amino-acid chain: Prs ADP-ribosylating toxin (161 aa).

It belongs to the MbcT/ParT/Res family. In terms of assembly, homodimer, forms heterotetrameric ParS(2)-ParT(2) complexes. Post-translationally, consumes NAD(+) and auto-ADP-ribosylates on the tryptic fragment Ala-47-Arg-66 in vitro. Also auto-ADP-ribosylates using NADP(+).

In terms of biological role, toxic component of a type II toxin-antitoxin (TA) system. Expression in E.coli inhibits cell growth; bacteriostasis is neutralized by expression of cognate antitoxin ParS. ADP-ribosylates E.coli ribose-phosphate pyrophosphokinase (RPPK, prs) using NAD(+) in vitro; ADP-ribosylates RPPK on 'Lys-182' and 'Ser-202'. Cannot use NADP(+). Also auto-ADP-ribosylates in vitro; in the presence of RPPK auto-ADP-ribosylation decreases. The protein is Prs ADP-ribosylating toxin of Sphingobium sp. (strain YBL2).